The sequence spans 155 residues: Putative pre-16S rRNA nuclease (155 aa).

The protein belongs to the YqgF nuclease family.

The protein resides in the cytoplasm. Could be a nuclease involved in processing of the 5'-end of pre-16S rRNA. In Wolbachia sp. subsp. Drosophila simulans (strain wRi), this protein is Putative pre-16S rRNA nuclease.